Consider the following 110-residue polypeptide: SGPIQLWQFLLELLTDKTCQHIISWTGDGWEFKLSDPDEVARRWGKRKNKPKMNYEKLSRGLRYYYDKNIIHKTAGKRYVYRFVCDLQSLLGYSPEELHEMVGVPPRDDD.

Positions 1–84 form a DNA-binding region, ETS; sequence SGPIQLWQFL…AGKRYVYRFV (84 aa).

The protein belongs to the ETS family.

It is found in the nucleus. In terms of biological role, probable transcription factor. This chain is Protein C-ets-2 (ETS-2), found in Lytechinus variegatus (Green sea urchin).